The primary structure comprises 586 residues: Germ cell nuclear acidic protein (586 aa).

4 disordered regions span residues glycine 17–glutamate 119, lysine 176–phenylalanine 202, threonine 217–glutamate 266, and leucine 279–aspartate 318. Basic and acidic residues predominate over residues serine 65 to isoleucine 76. The segment covering threonine 94–glutamine 107 has biased composition (polar residues). Residues lysine 176–lysine 191 show a composition bias toward basic residues. Over residues proline 225–arginine 244 the composition is skewed to basic and acidic residues. Residues cysteine 299–glutamine 313 show a composition bias toward polar residues. The region spanning lysine 383–histidine 482 is the SprT-like domain.

The protein belongs to the serine-aspartate repeat-containing protein (SDr) family.

Its subcellular location is the nucleus. It is found in the PML body. The protein localises to the chromosome. In terms of biological role, may play a role in DNA-protein cross-links (DPCs) clearance, ensuring the genomic stability by protecting germ cells and early embryos from various sources of damage. The protein is Germ cell nuclear acidic protein (gcna) of Danio rerio (Zebrafish).